We begin with the raw amino-acid sequence, 257 residues long: Aquaporin TIP4-2 (257 aa).

2 helical membrane-spanning segments follow: residues 32–52 (LVLTFLFVFTGVSASMAAGAG) and 63–83 (TLAAVAIAHALAAGVLVTAGF). The NPA 1 motif lies at 91–93 (NPA). 3 helical membrane-spanning segments follow: residues 107–127 (LRALLYVAAQLLASSLACILL), 150–170 (GLVMEVILTFSLLFVTYAMIL), and 178–198 (TIGPLLTGLIVGANSLAGGNF). The short motif at 204 to 206 (NPA) is the NPA 2 element. The helical transmembrane segment at 225–245 (WIGPLLGGSLAGFVYESLFMV) threads the bilayer.

Belongs to the MIP/aquaporin (TC 1.A.8) family. TIP (TC 1.A.8.10) subfamily.

The protein localises to the vacuole membrane. Aquaporins facilitate the transport of water and small neutral solutes across cell membranes. This chain is Aquaporin TIP4-2 (TIP4-2), found in Zea mays (Maize).